The following is a 161-amino-acid chain: Calmodulin-like protein (161 aa).

4 consecutive EF-hand domains span residues 21-56, 57-92, 93-128, and 129-161; these read EEID…LGQN, PTEQ…MMKE, TDSE…MGMQ, and FSEE…MSNQ. D34, D36, N38, T40, E45, D70, D72, N74, Q76, E81, D106, D108, N110, E117, D142, D144, D146, E148, and E153 together coordinate Ca(2+).

This sequence belongs to the calmodulin family.

In terms of biological role, this protein resembles calmodulin in sequence but possibly resembles troponin C in function. The sequence is that of Calmodulin-like protein (cal-1) from Caenorhabditis elegans.